Here is a 640-residue protein sequence, read N- to C-terminus: Probable serine/threonine-protein kinase samkA (640 aa).

One can recognise an SAM domain in the interval 21–84 (WNNEKIIKWL…SEFEILKNNY (64 aa)). The stretch at 73-100 (FKSEFEILKNNYDNNNNNNNNNNNNNNN) forms a coiled coil. Residues 84-165 (YDNNNNNNNN…INFNSNSNIT (82 aa)) form a disordered region. The Protein kinase domain maps to 191–437 (YEYVESISLG…SKDLQKLSWF (247 aa)). ATP-binding positions include 197–205 (ISLGVFSVV) and Lys221. Asp312 (proton acceptor) is an active-site residue. The interval 448-482 (QELTKSTTNTTTTTTTTTTPPPPPSPSSSSPSMNE) is disordered. Residues 453–465 (STTNTTTTTTTTT) show a composition bias toward low complexity.

Belongs to the protein kinase superfamily. Ser/Thr protein kinase family.

It carries out the reaction L-seryl-[protein] + ATP = O-phospho-L-seryl-[protein] + ADP + H(+). It catalyses the reaction L-threonyl-[protein] + ATP = O-phospho-L-threonyl-[protein] + ADP + H(+). In Dictyostelium discoideum (Social amoeba), this protein is Probable serine/threonine-protein kinase samkA (samkA).